The primary structure comprises 274 residues: Large ribosomal subunit protein uL2cz/uL2cy (274 aa).

Disordered regions lie at residues Met1–Asn25 and Asn224–Lys274.

It belongs to the universal ribosomal protein uL2 family. In terms of assembly, part of the 50S ribosomal subunit.

It is found in the plastid. The protein localises to the chloroplast. The chain is Large ribosomal subunit protein uL2cz/uL2cy (rpl2-A) from Cucumis sativus (Cucumber).